Here is a 173-residue protein sequence, read N- to C-terminus: Xanthine-guanine phosphoribosyltransferase (173 aa).

5-phospho-alpha-D-ribose 1-diphosphate is bound by residues 48–49 (RG) and 107–115 (DDLVDTGKT). Aspartate 108 serves as a coordination point for Mg(2+). The guanine site is built by aspartate 111 and isoleucine 154. Residues aspartate 111 and isoleucine 154 each coordinate xanthine. Residues 111 to 115 (DTGKT) and 153 to 154 (WI) contribute to the GMP site.

This sequence belongs to the purine/pyrimidine phosphoribosyltransferase family. XGPT subfamily. In terms of assembly, homotetramer. The cofactor is Mg(2+).

Its subcellular location is the cell inner membrane. The enzyme catalyses GMP + diphosphate = guanine + 5-phospho-alpha-D-ribose 1-diphosphate. It catalyses the reaction XMP + diphosphate = xanthine + 5-phospho-alpha-D-ribose 1-diphosphate. It carries out the reaction IMP + diphosphate = hypoxanthine + 5-phospho-alpha-D-ribose 1-diphosphate. Its pathway is purine metabolism; GMP biosynthesis via salvage pathway; GMP from guanine: step 1/1. It functions in the pathway purine metabolism; XMP biosynthesis via salvage pathway; XMP from xanthine: step 1/1. Functionally, purine salvage pathway enzyme that catalyzes the transfer of the ribosyl-5-phosphate group from 5-phospho-alpha-D-ribose 1-diphosphate (PRPP) to the N9 position of the 6-oxopurines guanine and xanthine to form the corresponding ribonucleotides GMP (guanosine 5'-monophosphate) and XMP (xanthosine 5'-monophosphate), with the release of PPi. To a lesser extent, also acts on hypoxanthine. The protein is Xanthine-guanine phosphoribosyltransferase of Rhodopseudomonas palustris (strain ATCC BAA-98 / CGA009).